A 209-amino-acid chain; its full sequence is Ribosomal RNA large subunit methyltransferase E (209 aa).

S-adenosyl-L-methionine is bound by residues G63, W65, D83, D99, and D124. K164 functions as the Proton acceptor in the catalytic mechanism.

The protein belongs to the class I-like SAM-binding methyltransferase superfamily. RNA methyltransferase RlmE family.

The protein resides in the cytoplasm. It catalyses the reaction uridine(2552) in 23S rRNA + S-adenosyl-L-methionine = 2'-O-methyluridine(2552) in 23S rRNA + S-adenosyl-L-homocysteine + H(+). Specifically methylates the uridine in position 2552 of 23S rRNA at the 2'-O position of the ribose in the fully assembled 50S ribosomal subunit. The polypeptide is Ribosomal RNA large subunit methyltransferase E (Vibrio atlanticus (strain LGP32) (Vibrio splendidus (strain Mel32))).